The following is a 635-amino-acid chain: DNA mismatch repair protein MutL (635 aa).

The protein belongs to the DNA mismatch repair MutL/HexB family.

Functionally, this protein is involved in the repair of mismatches in DNA. It is required for dam-dependent methyl-directed DNA mismatch repair. May act as a 'molecular matchmaker', a protein that promotes the formation of a stable complex between two or more DNA-binding proteins in an ATP-dependent manner without itself being part of a final effector complex. This is DNA mismatch repair protein MutL from Yersinia pestis bv. Antiqua (strain Angola).